A 78-amino-acid polypeptide reads, in one-letter code: D-alanyl carrier protein (78 aa).

The region spanning 1–78 is the Carrier domain; that stretch reads MEFREQVLDL…KIVEVLEELR (78 aa). O-(pantetheine 4'-phosphoryl)serine is present on Ser36.

The protein belongs to the DltC family. In terms of processing, 4'-phosphopantetheine is transferred from CoA to a specific serine of apo-DCP.

The protein localises to the cytoplasm. Its pathway is cell wall biogenesis; lipoteichoic acid biosynthesis. Its function is as follows. Carrier protein involved in the D-alanylation of lipoteichoic acid (LTA). The loading of thioester-linked D-alanine onto DltC is catalyzed by D-alanine--D-alanyl carrier protein ligase DltA. The DltC-carried D-alanyl group is further transferred to cell membrane phosphatidylglycerol (PG) by forming an ester bond, probably catalyzed by DltD. D-alanylation of LTA plays an important role in modulating the properties of the cell wall in Gram-positive bacteria, influencing the net charge of the cell wall. The chain is D-alanyl carrier protein from Staphylococcus xylosus.